Consider the following 640-residue polypeptide: Putative GTPase-activating protein C1620.12c (640 aa).

The interval 96 to 120 (QPLQGHSPVPSFMSTASTNISSSKI) is disordered. Residues 109–120 (STASTNISSSKI) show a composition bias toward low complexity. The Rab-GAP TBC domain maps to 215-408 (CIPSPCRKLV…RLMDLIAIYG (194 aa)). Positions 500 to 636 (RQNNLEELKN…LQTKWKSVSE (137 aa)) form a coiled coil.

This sequence belongs to the GYP5 family.

It localises to the nucleus. The protein resides in the cytoplasm. The sequence is that of Putative GTPase-activating protein C1620.12c from Schizosaccharomyces pombe (strain 972 / ATCC 24843) (Fission yeast).